The primary structure comprises 385 residues: S-adenosylmethionine synthase (385 aa).

His-16 is a binding site for ATP. A Mg(2+)-binding site is contributed by Asp-18. Glu-44 serves as a coordination point for K(+). Residues Glu-57 and Gln-100 each coordinate L-methionine. Positions 100 to 110 are flexible loop; it reads QSPDINQGVDK. ATP contacts are provided by residues 165–167, 231–232, Asp-240, 246–247, Ala-263, and Lys-267; these read DAK, RF, and RK. Residue Asp-240 participates in L-methionine binding. Position 271 (Lys-271) interacts with L-methionine.

The protein belongs to the AdoMet synthase family. Homotetramer; dimer of dimers. Mg(2+) is required as a cofactor. Requires K(+) as cofactor.

The protein localises to the cytoplasm. The enzyme catalyses L-methionine + ATP + H2O = S-adenosyl-L-methionine + phosphate + diphosphate. Its pathway is amino-acid biosynthesis; S-adenosyl-L-methionine biosynthesis; S-adenosyl-L-methionine from L-methionine: step 1/1. Catalyzes the formation of S-adenosylmethionine (AdoMet) from methionine and ATP. The overall synthetic reaction is composed of two sequential steps, AdoMet formation and the subsequent tripolyphosphate hydrolysis which occurs prior to release of AdoMet from the enzyme. The chain is S-adenosylmethionine synthase from Vibrio cholerae serotype O1 (strain ATCC 39315 / El Tor Inaba N16961).